Consider the following 116-residue polypeptide: UPF0102 protein IL0423 (116 aa).

The protein belongs to the UPF0102 family.

This Idiomarina loihiensis (strain ATCC BAA-735 / DSM 15497 / L2-TR) protein is UPF0102 protein IL0423.